A 2776-amino-acid polypeptide reads, in one-letter code: A-kinase anchor protein 13 (2776 aa).

11 disordered regions span residues Lys371–Gln401, Glu452–Thr518, Pro547–Pro584, Thr618–Ser641, Glu653–Met689, Val760–Ala871, Ala910–Leu951, Gly995–Gly1029, Leu1431–Ile1508, Pro1527–Asn1546, and Arg1565–Glu1603. Over residues Asp389–Gln401 the composition is skewed to polar residues. Residues Gln493–Thr515 are important for interaction with PRKAR2A. Over residues Pro560–Cys573 the composition is skewed to basic and acidic residues. A compositionally biased stretch (polar residues) spans Ala659 to Gly672. Low complexity predominate over residues Ser773–Glu788. Ser784 is subject to Phosphoserine. Thr809 carries the phosphothreonine modification. Basic and acidic residues-rich tracts occupy residues Asp820 to Gly834 and Asp914 to Arg940. Phosphothreonine is present on Thr941. Residues Thr1005 to Gln1020 show a composition bias toward polar residues. Low complexity predominate over residues Asp1433 to Thr1444. The span at Gly1454 to Gly1476 shows a compositional bias: polar residues. Ser1455, Ser1473, Ser1507, Ser1532, and Ser1569 each carry phosphoserine. An important for interaction with MAP2K3 region spans residues Arg1552 to Asn1678. The segment covering Ser1583–Ser1594 has biased composition (low complexity). Ser1608, Ser1611, and Ser1613 each carry phosphoserine. N6-methyllysine is present on Lys1637. Residues Thr1711–Thr1756 form a disordered region. Residues Lys1724–Thr1751 are compositionally biased toward basic and acidic residues. The segment at Gly1754–Cys1801 adopts a Phorbol-ester/DAG-type zinc-finger fold. A phosphoserine mark is found at Ser1839, Ser1858, and Ser1892. The interaction with ESR1 stretch occupies residues Met1882–Cys2776. Thr1893 is modified (phosphothreonine). Residues Ser1895 and Ser1908 each carry the phosphoserine modification. Residues Lys1957–Lys2154 form the DH domain. The PH domain occupies Lys2194–Asn2296. 2 positions are modified to phosphoserine: Ser2308 and Ser2361. Residues Ser2308–Ile2345 adopt a coiled-coil conformation. Thr2431 carries the post-translational modification Phosphothreonine. Residues Asp2436–Asn2471 are disordered. Residues Gln2455 to Leu2466 are compositionally biased toward basic and acidic residues. Phosphoserine occurs at positions 2527 and 2530. Positions Leu2532 to Gln2646 form a coiled coil. Disordered stretches follow at residues Ala2549–Gln2605 and Glu2626–Cys2776. 2 stretches are compositionally biased toward basic and acidic residues: residues His2558–Gln2605 and Glu2626–Ser2640. Polar residues-rich tracts occupy residues Gln2641–Asn2653, Leu2665–Arg2700, and Ser2713–Pro2727. Ser2673 and Ser2692 each carry phosphoserine.

In terms of assembly, interacts with the cAMP-dependent protein kinase (PKA) holoenzyme and with the regulatory subunit PRKAR2A. Interacts with RHOA. Also interacts with RHOB and RHOC. Identified in a ternary complex with RHOA and PRKAR2A. Identified in a complex with NR3C1 and RHOA. Interacts with BRAF and KSR1. Identified in a complex with BRAF and KSR1. Component of a signaling complex containing at least AKAP13, PKN1, MAPK14, ZAK and MAP2K3. Within this complex, AKAP13 interacts directly with PKN1, which in turn recruits MAPK14, MAP2K3 and ZAK. Interacts (phosphorylated form) with YWHAB and YWHAZ. Interaction with YWHAB inhibits activation of RHOA, interferes with PKN1 binding and activation of MAP kinases. Interacts with GNA12. Interacts with IKBKB. Interacts with ESR1, THRA, PPARA and NME2. Interacts (via the C-terminal domain after the PH domain) with MEF2C and RXRB. Interacts (via the C-terminal domain after the PH domain) with PRKD1. In terms of tissue distribution, detected in embryonic heart, limb bud, first branchial arch and forebrain (at protein level). Detected in heart. Detected in perichondrium, but not in the bone growth plate.

Its subcellular location is the cytoplasm. The protein resides in the cytosol. The protein localises to the cell cortex. It localises to the cytoskeleton. It is found in the nucleus. Its subcellular location is the membrane. In terms of biological role, scaffold protein that plays an important role in assembling signaling complexes downstream of several types of G protein-coupled receptors. Activates RHOA in response to signaling via G protein-coupled receptors via its function as Rho guanine nucleotide exchange factor. May also activate other Rho family members. Part of a kinase signaling complex that links ADRA1A and ADRA1B adrenergic receptor signaling to the activation of downstream p38 MAP kinases, such as MAPK11 and MAPK14. Part of a signaling complex that links ADRA1B signaling to the activation of RHOA and IKBKB/IKKB, leading to increased NF-kappa-B transcriptional activity. Part of a RHOA-dependent signaling cascade that mediates responses to lysophosphatidic acid (LPA), a signaling molecule that activates G-protein coupled receptors and potentiates transcriptional activation of the glucocorticoid receptor NR3C1. Part of a signaling cascade that stimulates MEF2C-dependent gene expression in response to lysophosphatidic acid (LPA). Part of a signaling pathway that activates MAPK11 and/or MAPK14 and leads to increased transcription activation of the estrogen receptors ESR1 and ESR2. Part of a signaling cascade that links cAMP and EGFR signaling to BRAF signaling and to PKA-mediated phosphorylation of KSR1, leading to the activation of downstream MAP kinases, such as MAPK1 or MAPK3. Functions as a scaffold protein that anchors cAMP-dependent protein kinase (PKA) and PRKD1. This promotes activation of PRKD1, leading to increased phosphorylation of HDAC5 and ultimately cardiomyocyte hypertrophy. Has no guanine nucleotide exchange activity on CDC42, Ras or Rac. Required for normal embryonic heart development, and in particular for normal sarcomere formation in the developing cardiomyocytes. Plays a role in cardiomyocyte growth and cardiac hypertrophy in response to activation of the beta-adrenergic receptor by phenylephrine or isoproterenol. Required for normal adaptive cardiac hypertrophy in response to pressure overload. Plays a role in osteogenesis. The chain is A-kinase anchor protein 13 from Mus musculus (Mouse).